The chain runs to 148 residues: Macrodomain Ter protein (148 aa).

This sequence belongs to the MatP family. Homodimer.

It localises to the cytoplasm. Its function is as follows. Required for spatial organization of the terminus region of the chromosome (Ter macrodomain) during the cell cycle. Prevents early segregation of duplicated Ter macrodomains during cell division. Binds specifically to matS, which is a 13 bp signature motif repeated within the Ter macrodomain. The protein is Macrodomain Ter protein of Pasteurella multocida (strain Pm70).